The primary structure comprises 177 residues: MANQEKIEAVALLKGKLETRNNFILACYSGLTVEEITGLRAQLRKEGSEMKVLKNNLFLRALKESGAHKDKNITFGSEYQGPLAAIFAKDNLPAIAKVCKDFAKNNKNLIVKAGYMDGSVLDANGVDAIAGLPSREQLLAQIAGGINGPARTIASGINQIIASLARAIQATAEKNNA.

This sequence belongs to the universal ribosomal protein uL10 family. In terms of assembly, part of the ribosomal stalk of the 50S ribosomal subunit. The N-terminus interacts with L11 and the large rRNA to form the base of the stalk. The C-terminus forms an elongated spine to which L12 dimers bind in a sequential fashion forming a multimeric L10(L12)X complex.

Forms part of the ribosomal stalk, playing a central role in the interaction of the ribosome with GTP-bound translation factors. The polypeptide is Large ribosomal subunit protein uL10 (Leptospira interrogans serogroup Icterohaemorrhagiae serovar copenhageni (strain Fiocruz L1-130)).